Reading from the N-terminus, the 216-residue chain is Probable GTP-binding protein EngB (216 aa).

The 175-residue stretch at 26–200 folds into the EngB-type G domain; the sequence is EGIEIAFAGR…RAKLDTWFAP (175 aa). GTP contacts are provided by residues 34–41, 61–65, 79–82, 146–149, and 179–181; these read GRSNAGKS, GRTQL, DLPG, TKAD, and YSS. The Mg(2+) site is built by serine 41 and threonine 63.

This sequence belongs to the TRAFAC class TrmE-Era-EngA-EngB-Septin-like GTPase superfamily. EngB GTPase family. The cofactor is Mg(2+).

In terms of biological role, necessary for normal cell division and for the maintenance of normal septation. In Vibrio vulnificus (strain CMCP6), this protein is Probable GTP-binding protein EngB.